The sequence spans 636 residues: Endoglucanase 4 (636 aa).

Residues 1–25 (MTRRWSFLVQCFTFKKKEGVRSRYM) form the signal peptide. The Nucleophile role is filled by Asp-82. Catalysis depends on residues His-400, Asp-438, and Glu-447. In terms of domain architecture, CBM3 spans 478–635 (KVEDEFFVEA…GDLVFGTLPN (158 aa)).

Belongs to the glycosyl hydrolase 9 (cellulase E) family.

It is found in the secreted. The catalysed reaction is Endohydrolysis of (1-&gt;4)-beta-D-glucosidic linkages in cellulose, lichenin and cereal beta-D-glucans.. In Bacillus sp. (strain KSM-522), this protein is Endoglucanase 4.